The chain runs to 138 residues: Transcription factor Atoh7-a (138 aa).

Residues Lys-33 to Leu-85 form the bHLH domain.

The protein resides in the nucleus. It is found in the perikaryon. Its subcellular location is the cell projection. The protein localises to the axon. Its function is as follows. Transcription factor that binds to DNA at the consensus sequence 5'-CAG[GC]TG-3'. Positively regulates the determination of retinal ganglion cell fate and formation of the optic nerve and retino-hypothalamic tract. Required for retinal circadian rhythm photoentrainment. Plays a role in brainstem auditory signaling and binaural processing. Regulates the differentiation of olfactory receptor neurons. During retinal neurogenesis, activates the transcription of several genes such as brn3d, coe3, cbfa2t2, glis2, elrC and xgadd45-gamma. The sequence is that of Transcription factor Atoh7-a from Xenopus laevis (African clawed frog).